Consider the following 37-residue polypeptide: Large ribosomal subunit protein bL36c (37 aa).

This sequence belongs to the bacterial ribosomal protein bL36 family.

The protein localises to the plastid. The protein resides in the chloroplast. In Cyanidioschyzon merolae (strain NIES-3377 / 10D) (Unicellular red alga), this protein is Large ribosomal subunit protein bL36c.